We begin with the raw amino-acid sequence, 973 residues long: Putative helicase 022R (973 aa).

Residues Ala473–Ser502 are disordered. The span at Asn483 to Asn498 shows a compositional bias: acidic residues. Residues Gly658–Ala840 form the SF3 helicase domain. Gly702–Thr709 is an ATP binding site.

This chain is Putative helicase 022R, found in Frog virus 3 (isolate Goorha) (FV-3).